We begin with the raw amino-acid sequence, 240 residues long: UDP-2,3-diacylglucosamine hydrolase (240 aa).

Mn(2+)-binding residues include aspartate 8, histidine 10, aspartate 41, asparagine 78, and histidine 113. Substrate is bound at residue asparagine 78–arginine 79. Substrate is bound by residues aspartate 121, serine 159, asparagine 163, lysine 166, and histidine 194. Mn(2+) is bound by residues histidine 194 and histidine 196.

Belongs to the LpxH family. Mn(2+) serves as cofactor.

The protein localises to the cell inner membrane. The catalysed reaction is UDP-2-N,3-O-bis[(3R)-3-hydroxytetradecanoyl]-alpha-D-glucosamine + H2O = 2-N,3-O-bis[(3R)-3-hydroxytetradecanoyl]-alpha-D-glucosaminyl 1-phosphate + UMP + 2 H(+). It participates in glycolipid biosynthesis; lipid IV(A) biosynthesis; lipid IV(A) from (3R)-3-hydroxytetradecanoyl-[acyl-carrier-protein] and UDP-N-acetyl-alpha-D-glucosamine: step 4/6. Functionally, hydrolyzes the pyrophosphate bond of UDP-2,3-diacylglucosamine to yield 2,3-diacylglucosamine 1-phosphate (lipid X) and UMP by catalyzing the attack of water at the alpha-P atom. Involved in the biosynthesis of lipid A, a phosphorylated glycolipid that anchors the lipopolysaccharide to the outer membrane of the cell. The sequence is that of UDP-2,3-diacylglucosamine hydrolase from Shewanella baltica (strain OS185).